Reading from the N-terminus, the 139-residue chain is Large-conductance mechanosensitive channel (139 aa).

The next 3 membrane-spanning stretches (helical) occupy residues 14–34, 38–58, and 82–102; these read VVDLAVGVIIGAAFGAIVNSA, IFMPVIGAITGGLDFSNYYIP, and GQFLTLTLNFAIVAFVLFLVI.

It belongs to the MscL family. In terms of assembly, homopentamer.

It is found in the cell inner membrane. Channel that opens in response to stretch forces in the membrane lipid bilayer. May participate in the regulation of osmotic pressure changes within the cell. This Methylobacterium radiotolerans (strain ATCC 27329 / DSM 1819 / JCM 2831 / NBRC 15690 / NCIMB 10815 / 0-1) protein is Large-conductance mechanosensitive channel.